Reading from the N-terminus, the 379-residue chain is ATP-sensitive inward rectifier potassium channel 10 (379 aa).

The Cytoplasmic segment spans residues 1–61; that stretch reads MTSVAKVYYS…LKDLWTTFID (61 aa). A 1,2-dioctanoyl-sn-glycero-3-phospho-(1D-myo-inositol-4,5-bisphosphate)-binding site is contributed by R36. Residues 62 to 88 traverse the membrane as a helical segment; it reads MQWRYKLLLFSATFAGTWFLFGVVWYL. Residues 89–114 are Extracellular-facing; it reads VAVAHGDLLELGPPANHTPCVVQVHT. Residues C108 and C140 are joined by a disulfide bond. The segment at residues 115 to 131 is an intramembrane region (discontinuously helical; Pore-forming); it reads LTGAFLFSLESQTTIGY. A Selectivity filter motif is present at residues 128-133; the sequence is TIGYGF. The Extracellular segment spans residues 132-140; sequence GFRYISEEC. The chain crosses the membrane as a helical span at residues 141 to 166; sequence PLAIVLLIAQLVLTTILEIFITGTFL. Residues 167 to 379 are Cytoplasmic-facing; the sequence is AKIARPKKRA…SALSVRISNV (213 aa). 3 residues coordinate 1,2-dioctanoyl-sn-glycero-3-phospho-(1D-myo-inositol-4,5-bisphosphate): K168, R171, and K173. 210–217 is a binding site for ATP; sequence GCQVTGKL.

Belongs to the inward rectifier-type potassium channel (TC 1.A.2.1) family. KCNJ10 subfamily. In terms of assembly, homotetramer. In kidney cells, it forms heteromeric channels with Kir5.1/KCNJ16; this interaction is required for KCNJ16 localization to the basolateral membrane. Interacts with MAGI1, alone and possibly as a heteromer with KCNJ16; this interaction may facilitate KCNJ10/KCNJ16 potassium channel expression at the basolateral membrane in kidney cells. Interacts with PATJ. As to expression, predominantly expressed in the brain, including in glial cells of the cerebellum and forebrain. Expressed at lower levels in the kidney, and other peripheral tissues.

Its subcellular location is the membrane. The protein localises to the basolateral cell membrane. The catalysed reaction is K(+)(in) = K(+)(out). With respect to regulation, channel activity is strongly regulated by variations of cytosolic pH; channels are activated by alkaline and inhibited by acidic pH values. Activated by phosphatidylinositol 4,5 biphosphate (PtdIns(4,5)P2). Inhibited by Ba(2+) and Cs(+). Functionally, may be responsible for potassium buffering action of glial cells in the brain. Inward rectifier potassium channels are characterized by a greater tendency to allow potassium to flow into the cell rather than out of it. Their voltage dependence is regulated by the concentration of extracellular potassium; as external potassium is raised, the voltage range of the channel opening shifts to more positive voltages. The inward rectification is mainly due to the blockage of outward current by internal magnesium. Can be blocked by extracellular barium and cesium. In the kidney, together with KCNJ16, mediates basolateral K(+) recycling in distal tubules; this process is critical for Na(+) reabsorption at the tubules. This is ATP-sensitive inward rectifier potassium channel 10 from Rattus norvegicus (Rat).